Here is a 165-residue protein sequence, read N- to C-terminus: Large ribosomal subunit protein uL5 (165 aa).

This sequence belongs to the universal ribosomal protein uL5 family. Part of the 50S ribosomal subunit; contacts the 5S rRNA and probably tRNA. Forms a bridge to the 30S subunit in the 70S ribosome.

This is one of the proteins that bind and probably mediate the attachment of the 5S RNA into the large ribosomal subunit, where it forms part of the central protuberance. In the 70S ribosome it contacts protein S13 of the 30S subunit (bridge B1b), connecting the 2 subunits; this bridge is implicated in subunit movement. May contact the P site tRNA; the 5S rRNA and some of its associated proteins might help stabilize positioning of ribosome-bound tRNAs. This is Large ribosomal subunit protein uL5 from Methanoregula boonei (strain DSM 21154 / JCM 14090 / 6A8).